The chain runs to 142 residues: MITEFIKSFLLFFFLPFFLSMPMIFATLGEFTDDQTHHYSTLPSCDLLLIRGEVKENARCFLHNPKISHQHHSFWSLIEGCLEALQFGLLAILQGLFSQFAWEACSCTFACMLLTSERTEPSYPFSEITEVSRGGLHFVKLN.

The signal sequence occupies residues 1-26; it reads MITEFIKSFLLFFFLPFFLSMPMIFA.

This is an uncharacterized protein from Schizosaccharomyces pombe (strain 972 / ATCC 24843) (Fission yeast).